The primary structure comprises 119 residues: UPF0102 protein MS1289 (119 aa).

It belongs to the UPF0102 family.

The polypeptide is UPF0102 protein MS1289 (Mannheimia succiniciproducens (strain KCTC 0769BP / MBEL55E)).